The sequence spans 188 residues: dCTP deaminase (188 aa).

Residues 111 to 116, 135 to 137, Q156, Y170, and Q180 each bind dCTP; these read KSTYAR and TLE. E137 serves as the catalytic Proton donor/acceptor.

Belongs to the dCTP deaminase family. As to quaternary structure, homotrimer.

The enzyme catalyses dCTP + H2O + H(+) = dUTP + NH4(+). It functions in the pathway pyrimidine metabolism; dUMP biosynthesis; dUMP from dCTP (dUTP route): step 1/2. Functionally, catalyzes the deamination of dCTP to dUTP. In Francisella tularensis subsp. tularensis (strain FSC 198), this protein is dCTP deaminase.